The sequence spans 264 residues: Thymidylate synthase (264 aa).

Arginine 21 contributes to the dUMP binding site. Histidine 51 contributes to the (6R)-5,10-methylene-5,6,7,8-tetrahydrofolate binding site. A dUMP-binding site is contributed by 126–127 (RR). Residue cysteine 146 is the Nucleophile of the active site. Residues 166-169 (RSAD), asparagine 177, and 207-209 (HIY) each bind dUMP. Aspartate 169 lines the (6R)-5,10-methylene-5,6,7,8-tetrahydrofolate pocket. A (6R)-5,10-methylene-5,6,7,8-tetrahydrofolate-binding site is contributed by alanine 263.

It belongs to the thymidylate synthase family. Bacterial-type ThyA subfamily. In terms of assembly, homodimer.

Its subcellular location is the cytoplasm. The enzyme catalyses dUMP + (6R)-5,10-methylene-5,6,7,8-tetrahydrofolate = 7,8-dihydrofolate + dTMP. The protein operates within pyrimidine metabolism; dTTP biosynthesis. In terms of biological role, catalyzes the reductive methylation of 2'-deoxyuridine-5'-monophosphate (dUMP) to 2'-deoxythymidine-5'-monophosphate (dTMP) while utilizing 5,10-methylenetetrahydrofolate (mTHF) as the methyl donor and reductant in the reaction, yielding dihydrofolate (DHF) as a by-product. This enzymatic reaction provides an intracellular de novo source of dTMP, an essential precursor for DNA biosynthesis. This Parabacteroides distasonis (strain ATCC 8503 / DSM 20701 / CIP 104284 / JCM 5825 / NCTC 11152) protein is Thymidylate synthase.